A 111-amino-acid polypeptide reads, in one-letter code: uncharacterized protein (111 aa).

A run of 4 helical transmembrane segments spans residues 4 to 21 (FITA…FVSF), 28 to 47 (LVYF…YMIY), 51 to 73 (TGIR…VTAF), and 80 to 102 (SFFF…YLGM).

It is found in the cell membrane. This is an uncharacterized protein from Bacillus subtilis (strain 168).